We begin with the raw amino-acid sequence, 154 residues long: Fibroblast growth factor 2 (154 aa).

The propeptide occupies 1–9; that stretch reads MAASGITSL. Asn-35 lines the heparin pocket. Position 81 is a phosphotyrosine; by TEC (Tyr-81). Residue Lys-94 forms a Glycyl lysine isopeptide (Lys-Gly) (interchain with G-Cter in SUMO1) linkage. The segment at 127–143 is heparin-binding; it reads KRTGQYKLGSKTGPGQK.

It belongs to the heparin-binding growth factors family. As to quaternary structure, monomer. Homodimer. Interacts with FGFR1, FGFR2, FGFR3 and FGFR4. Affinity between fibroblast growth factors (FGFs) and their receptors is increased by heparan sulfate glycosaminoglycans that function as coreceptors. Interacts with CSPG4, FGFBP1 and TEC. Found in a complex with FGFBP1, FGF1 and FGF2. Interacts with FGFBP3. Interacts with integrin ITGAV:ITGB3; the interaction is required for FGF2 signaling. Interacts with SNORC (via the extracellular domain). Interacts with glypican GPC3. Post-translationally, phosphorylation at Tyr-81 regulates FGF2 unconventional secretion.

Its subcellular location is the secreted. The protein localises to the nucleus. Functionally, acts as a ligand for FGFR1, FGFR2, FGFR3 and FGFR4. Also acts as an integrin ligand which is required for FGF2 signaling. Binds to integrin ITGAV:ITGB3. Plays an important role in the regulation of cell survival, cell division, cell differentiation and cell migration. Functions as a potent mitogen in vitro. Can induce angiogenesis. Mediates phosphorylation of ERK1/2 and thereby promotes retinal lens fiber differentiation. This Mus musculus (Mouse) protein is Fibroblast growth factor 2 (Fgf2).